Consider the following 325-residue polypeptide: Aspartate carbamoyltransferase catalytic subunit (325 aa).

R64 and T65 together coordinate carbamoyl phosphate. Residue K92 participates in L-aspartate binding. Positions 114, 142, and 145 each coordinate carbamoyl phosphate. L-aspartate is bound by residues R176 and R230. Residues G271 and P272 each contribute to the carbamoyl phosphate site.

Belongs to the aspartate/ornithine carbamoyltransferase superfamily. ATCase family. In terms of assembly, heterododecamer (2C3:3R2) of six catalytic PyrB chains organized as two trimers (C3), and six regulatory PyrI chains organized as three dimers (R2).

The enzyme catalyses carbamoyl phosphate + L-aspartate = N-carbamoyl-L-aspartate + phosphate + H(+). It participates in pyrimidine metabolism; UMP biosynthesis via de novo pathway; (S)-dihydroorotate from bicarbonate: step 2/3. In terms of biological role, catalyzes the condensation of carbamoyl phosphate and aspartate to form carbamoyl aspartate and inorganic phosphate, the committed step in the de novo pyrimidine nucleotide biosynthesis pathway. This Nitratidesulfovibrio vulgaris (strain DSM 19637 / Miyazaki F) (Desulfovibrio vulgaris) protein is Aspartate carbamoyltransferase catalytic subunit.